Here is a 124-residue protein sequence, read N- to C-terminus: Small ribosomal subunit protein uS13 (124 aa).

Residues 91-124 (HRKGLPVNGQNTRNNARTRKGKPKAVTGKKQAGK) form a disordered region.

It belongs to the universal ribosomal protein uS13 family. As to quaternary structure, part of the 30S ribosomal subunit. Forms a loose heterodimer with protein S19. Forms two bridges to the 50S subunit in the 70S ribosome.

Its function is as follows. Located at the top of the head of the 30S subunit, it contacts several helices of the 16S rRNA. In the 70S ribosome it contacts the 23S rRNA (bridge B1a) and protein L5 of the 50S subunit (bridge B1b), connecting the 2 subunits; these bridges are implicated in subunit movement. Contacts the tRNAs in the A and P-sites. This is Small ribosomal subunit protein uS13 from Acholeplasma laidlawii (strain PG-8A).